Reading from the N-terminus, the 558-residue chain is Phosphatidylserine lipase ABHD16A (558 aa).

Transmembrane regions (helical) follow at residues 60-80 and 93-113; these read ILALASVFWSISYYSSPFAFF and VVPFSHYAGTLLLLLAGVACL. Residues 114–558 lie on the Cytoplasmic side of the membrane; that stretch reads RGIGRWTNPQ…AQNFQMPWHL (445 aa). Residues 281 to 407 form the AB hydrolase-1 domain; the sequence is LVICCEGNAG…LVTRTVRQHL (127 aa). Active-site charge relay system residues include S355, D430, and H507.

Belongs to the AB hydrolase superfamily. ABHD16 family.

It localises to the membrane. The catalysed reaction is 1-heptadecanoyl-2-(5Z,8Z,11Z,14Z-eicosatetraenoyl)-sn-glycero-3-phosphoserine + H2O = 1-heptadecanoyl-sn-glycero-3-phosphoserine + (5Z,8Z,11Z,14Z)-eicosatetraenoate + H(+). The enzyme catalyses 1-hexadecanoyl-2-(9Z-octadecenoyl)-sn-glycero-3-phospho-L-serine + H2O = 1-hexadecanoyl-sn-glycero-3-phospho-L-serine + (9Z)-octadecenoate + H(+). It carries out the reaction 1-octadecanoyl-2-(9Z,12Z-octadecadienoyl)-sn-glycero-3-phosphoserine + H2O = 1-octadecanoyl-sn-glycero-3-phosphoserine + (9Z,12Z)-octadecadienoate + H(+). It catalyses the reaction 1-heptadecanoyl-2-(5Z,8Z,11Z,14Z-eicosatetraenoyl)-sn-glycero-3-phosphocholine + H2O = 1-heptadecanoyl-sn-glycero-3-phosphocholine + (5Z,8Z,11Z,14Z)-eicosatetraenoate + H(+). The catalysed reaction is 1-hexadecanoyl-2-(9Z-octadecenoyl)-sn-glycero-3-phosphoglycerol + H2O = 1-hexadecanoyl-sn-glycero-3-phosphoglycerol + (9Z)-octadecenoate + H(+). The enzyme catalyses 1-hexadecanoyl-2-(9Z-octadecenoyl)-sn-glycero-3-phospho-(1D-myo-inositol) + H2O = 1-hexadecanoyl-sn-glycero-3-phospho-(1D-myo-inositol) + (9Z)-octadecenoate + H(+). It carries out the reaction 1-heptadecanoyl-2-(5Z,8Z,11Z,14Z-eicosatetraenoyl)-sn-glycero-3-phosphoethanolamine + H2O = 1-heptadecanoyl-sn-glycero-3-phosphoethanolamine + (5Z,8Z,11Z,14Z)-eicosatetraenoate + H(+). It catalyses the reaction 1-hexadecanoyl-2-(9Z-octadecenoyl)-sn-glycero-3-phospho-(1'-sn-glycerol) + H2O = 1-hexadecanoyl-sn-glycero-3-phospho-(1'-sn-glycerol) + (9Z)-octadecenoate + H(+). The catalysed reaction is Hydrolyzes glycerol monoesters of long-chain fatty acids.. The enzyme catalyses 1-tetradecanoylglycerol + H2O = tetradecanoate + glycerol + H(+). It carries out the reaction 2-hexadecanoylglycerol + H2O = glycerol + hexadecanoate + H(+). It catalyses the reaction 1-(9Z-octadecenoyl)-glycerol + H2O = glycerol + (9Z)-octadecenoate + H(+). The catalysed reaction is 2-(9Z-octadecenoyl)-glycerol + H2O = glycerol + (9Z)-octadecenoate + H(+). The enzyme catalyses 2-(9Z,12Z-octadecadienoyl)-glycerol + H2O = (9Z,12Z)-octadecadienoate + glycerol + H(+). It carries out the reaction 1-(5Z,8Z,11Z,14Z-eicosatetraenoyl)-glycerol + H2O = glycerol + (5Z,8Z,11Z,14Z)-eicosatetraenoate + H(+). It catalyses the reaction 2-(5Z,8Z,11Z,14Z-eicosatetraenoyl)-glycerol + H2O = glycerol + (5Z,8Z,11Z,14Z)-eicosatetraenoate + H(+). The catalysed reaction is prostaglandin D2-1-glycerol ester + H2O = prostaglandin D2 + glycerol + H(+). The enzyme catalyses 2-glyceryl-15-deoxy-Delta(12,14)-prostaglandin J2 + H2O = 15-deoxy-Delta(12,14)-prostaglandin J2 + glycerol + H(+). It carries out the reaction 1-(9Z,12Z-octadecadienoyl)-glycerol + H2O = (9Z,12Z)-octadecadienoate + glycerol + H(+). Phosphatidylserine (PS) lipase that mediates the hydrolysis of phosphatidylserine to generate lysophosphatidylserine (LPS). LPS constitutes a class of signaling lipids that regulates immunological and neurological processes. Has no activity towards diacylglycerol, triacylglycerol or lysophosphatidylserine lipase. Also has monoacylglycerol lipase activity, with preference for 1-(9Z,12Z-octadecadienoyl)-glycerol (1-LG) and 2-glyceryl-15-deoxy-Delta(12,14)-prostaglandin J2 (15d-PGJ(2)-G). This is Phosphatidylserine lipase ABHD16A from Macaca fascicularis (Crab-eating macaque).